The following is a 736-amino-acid chain: 1,4-alpha-glucan branching enzyme GlgB 2 (736 aa).

Asp415 functions as the Nucleophile in the catalytic mechanism. The active-site Proton donor is Glu468.

Belongs to the glycosyl hydrolase 13 family. GlgB subfamily. Monomer.

The enzyme catalyses Transfers a segment of a (1-&gt;4)-alpha-D-glucan chain to a primary hydroxy group in a similar glucan chain.. It participates in glycan biosynthesis; glycogen biosynthesis. Catalyzes the formation of the alpha-1,6-glucosidic linkages in glycogen by scission of a 1,4-alpha-linked oligosaccharide from growing alpha-1,4-glucan chains and the subsequent attachment of the oligosaccharide to the alpha-1,6 position. This is 1,4-alpha-glucan branching enzyme GlgB 2 from Rhizobium johnstonii (strain DSM 114642 / LMG 32736 / 3841) (Rhizobium leguminosarum bv. viciae).